The sequence spans 1032 residues: Y' element ATP-dependent helicase YPR204W (1032 aa).

One can recognise a Helicase ATP-binding domain in the interval 1 to 175 (MADTPSVAVQ…LQRIGLTGLA (175 aa)). An ATP-binding site is contributed by 11–18 (APPGYGKT). A DEAH box motif is present at residues 121-124 (DEFH). Residues 232–381 (KLLLALFEIE…EFYGLESKKG (150 aa)) enclose the Helicase C-terminal domain. Residues 455–634 (ANASTNATTN…ATTTESTNAS (180 aa)) show a composition bias toward low complexity. The segment at 455–658 (ANASTNATTN…RFHPVTDINK (204 aa)) is disordered. Residues 635-658 (AKEDANKDGNAEDNRFHPVTDINK) are compositionally biased toward basic and acidic residues.

It belongs to the helicase family. Yeast subtelomeric Y' repeat subfamily.

In terms of biological role, catalyzes DNA unwinding and is involved in telomerase-independent telomere maintenance. This Saccharomyces cerevisiae (strain ATCC 204508 / S288c) (Baker's yeast) protein is Y' element ATP-dependent helicase YPR204W.